The following is a 48-amino-acid chain: ATP synthase protein 8 (48 aa).

A helical membrane pass occupies residues 4 to 24; the sequence is LVPFFFVNQVVFAFIVLTVLI.

The protein belongs to the ATPase protein 8 family. F-type ATPases have 2 components, CF(1) - the catalytic core - and CF(0) - the membrane proton channel.

The protein localises to the mitochondrion membrane. Functionally, mitochondrial membrane ATP synthase (F(1)F(0) ATP synthase or Complex V) produces ATP from ADP in the presence of a proton gradient across the membrane which is generated by electron transport complexes of the respiratory chain. F-type ATPases consist of two structural domains, F(1) - containing the extramembraneous catalytic core and F(0) - containing the membrane proton channel, linked together by a central stalk and a peripheral stalk. During catalysis, ATP synthesis in the catalytic domain of F(1) is coupled via a rotary mechanism of the central stalk subunits to proton translocation. Part of the complex F(0) domain. Minor subunit located with subunit a in the membrane. In Emericella nidulans (Aspergillus nidulans), this protein is ATP synthase protein 8 (atp8).